Consider the following 681-residue polypeptide: Threonine--tRNA ligase (681 aa).

One can recognise a TGS domain in the interval 3 to 97 (KQIQVTLPDG…EEDVQLALLT (95 aa)). The tract at residues 279–576 (DHRVLGKQLD…LIEHYAGAFP (298 aa)) is catalytic. Residues Cys-372, His-423, and His-553 each contribute to the Zn(2+) site.

This sequence belongs to the class-II aminoacyl-tRNA synthetase family. In terms of assembly, homodimer. Zn(2+) is required as a cofactor.

It localises to the cytoplasm. The enzyme catalyses tRNA(Thr) + L-threonine + ATP = L-threonyl-tRNA(Thr) + AMP + diphosphate + H(+). Catalyzes the attachment of threonine to tRNA(Thr) in a two-step reaction: L-threonine is first activated by ATP to form Thr-AMP and then transferred to the acceptor end of tRNA(Thr). Also edits incorrectly charged L-seryl-tRNA(Thr). In Acidobacterium capsulatum (strain ATCC 51196 / DSM 11244 / BCRC 80197 / JCM 7670 / NBRC 15755 / NCIMB 13165 / 161), this protein is Threonine--tRNA ligase.